The chain runs to 669 residues: DNA ligase (669 aa).

Residues 33–37, 82–83, and E114 each bind NAD(+); these read DAEYD and SL. K116 serves as the catalytic N6-AMP-lysine intermediate. NAD(+) contacts are provided by R137, E174, K291, and K315. Positions 409, 412, 427, and 433 each coordinate Zn(2+). In terms of domain architecture, BRCT spans 593-669; that stretch reads EIPQPLAGKV…QTEQDLLALL (77 aa).

It belongs to the NAD-dependent DNA ligase family. LigA subfamily. Mg(2+) serves as cofactor. It depends on Mn(2+) as a cofactor.

It catalyses the reaction NAD(+) + (deoxyribonucleotide)n-3'-hydroxyl + 5'-phospho-(deoxyribonucleotide)m = (deoxyribonucleotide)n+m + AMP + beta-nicotinamide D-nucleotide.. Functionally, DNA ligase that catalyzes the formation of phosphodiester linkages between 5'-phosphoryl and 3'-hydroxyl groups in double-stranded DNA using NAD as a coenzyme and as the energy source for the reaction. It is essential for DNA replication and repair of damaged DNA. The sequence is that of DNA ligase from Vibrio vulnificus (strain YJ016).